The following is a 38-amino-acid chain: Photosystem I reaction center subunit IX (38 aa).

A helical transmembrane segment spans residues 4 to 24 (FLTTAPVFSAIWFTLTAGIMI).

This sequence belongs to the PsaJ family.

It is found in the plastid. Its subcellular location is the organellar chromatophore thylakoid membrane. Its function is as follows. May help in the organization of the PsaE and PsaF subunits. The protein is Photosystem I reaction center subunit IX of Paulinella chromatophora.